Reading from the N-terminus, the 545-residue chain is Capsular polysaccharide phosphotransferase SacB (545 aa).

It belongs to the stealth family.

Part of a capsular biosynthesis operon and has been suggested to be the polymerase that links individual UDP-N-acetyl-D-mannosamine monomers. In serotype A the capsule is composed of repeated units of (alpha 1-6)-linked N-acetyl-D-mannosamine-1-phosphate. Non-polar disruption of this open reading frame prevented capsule synthesis. The chain is Capsular polysaccharide phosphotransferase SacB (sacB) from Neisseria meningitidis serogroup A.